Consider the following 256-residue polypeptide: Pre-mRNA-splicing factor CWC24 (256 aa).

The disordered stretch occupies residues 1-80 (MFKRKKNAGQ…SRNLSKTDEA (80 aa)). Over residues 18–34 (SDSSSEGSGDESALSSA) the composition is skewed to low complexity. A compositionally biased stretch (polar residues) spans 45–66 (RTTPTSVATSTKVRAPSFSSTI). Over residues 67–80 (DHSHSRNLSKTDEA) the composition is skewed to basic and acidic residues. Residues 131-159 (DYQPDVCKDYKLTGFCGYGDSCKFLHMRE) form a C3H1-type zinc finger. Over residues 173–182 (IKNREDDPPR) the composition is skewed to basic and acidic residues. A disordered region spans residues 173–200 (IKNREDDPPRDAGGVSRDADTATSRADS). Residues 206-244 (CPICQGEFKSPVVTQCCHYFCEKCFLAKHKKKQNCFVCG) form an RING-type zinc finger.

The protein belongs to the CWC24 family. As to quaternary structure, associated with the spliceosome.

It is found in the nucleus. Its function is as follows. Involved in pre-mRNA splicing. This chain is Pre-mRNA-splicing factor CWC24 (CWC24), found in Yarrowia lipolytica (strain CLIB 122 / E 150) (Yeast).